Consider the following 475-residue polypeptide: Coronin-2B (475 aa).

WD repeat units lie at residues 80–120, 130–172, 174–212, 215–258, and 260–303; these read GHQG…LKRN, GHSR…KMID, HTDVILCMSFNTDGSLMATTCKDKKLRVLEPRSGRVLQE, CKNH…MPVT, and EEID…PYLT. Positions 431–470 form a coiled coil; it reads NELLRMFFKQQEEIRRLKEQLSQRDLLVRQLELELKNLRN.

This sequence belongs to the WD repeat coronin family.

The protein resides in the cytoplasm. The protein localises to the cytoskeleton. Functionally, may play a role in the reorganization of neuronal actin structure. The protein is Coronin-2B (coro2b) of Xenopus laevis (African clawed frog).